The chain runs to 126 residues: Small ribosomal subunit protein uS13 (126 aa).

A disordered region spans residues 92 to 126 (HRRGLPVRGQRTKTNARTRKGPRKTVAGKKKATRK).

The protein belongs to the universal ribosomal protein uS13 family. As to quaternary structure, part of the 30S ribosomal subunit. Forms a loose heterodimer with protein S19. Forms two bridges to the 50S subunit in the 70S ribosome.

Located at the top of the head of the 30S subunit, it contacts several helices of the 16S rRNA. In the 70S ribosome it contacts the 23S rRNA (bridge B1a) and protein L5 of the 50S subunit (bridge B1b), connecting the 2 subunits; these bridges are implicated in subunit movement. Contacts the tRNAs in the A and P-sites. In Deinococcus geothermalis (strain DSM 11300 / CIP 105573 / AG-3a), this protein is Small ribosomal subunit protein uS13.